Reading from the N-terminus, the 427-residue chain is FAD-dependent monooxygenase OpS4 (427 aa).

Residues 1–22 (MGSIREPLHLVVIGGGLAGLSA) form the signal peptide. Residue Glu-37 participates in FAD binding. Asn-54 is a glycosylation site (N-linked (GlcNAc...) asparagine). FAD-binding residues include Arg-112, Asp-306, and Ala-319.

This sequence belongs to the paxM FAD-dependent monooxygenase family. It depends on FAD as a cofactor.

The protein operates within secondary metabolite biosynthesis. In terms of biological role, FAD-dependent monooxygenase; part of the gene cluster that mediates the biosynthesis of the bibenzoquinone oosporein, a metabolite required for fungal virulence that acts by evading host immunity to facilitate fungal multiplication in insects. The non-reducing polyketide synthase OpS1 produces orsellinic acid by condensing acetyl-CoA with 3 malonyl-CoA units. Orsellinic acid is then hydroxylated to benzenetriol by the hydroxylase OpS4. The intermediate is oxidized either nonenzymatically to 5,5'-dideoxy-oosporein or enzymatically to benzenetetrol by the oxidoreductase OpS7. The latter is further dimerized to oosporein by the catalase OpS5. OpS6 probably functions en route for protecting cells against oxidative stress by scavenging any leaked free radical form of benzenetetrol by activating the thiol group of glutathione. In Beauveria bassiana (strain ARSEF 2860) (White muscardine disease fungus), this protein is FAD-dependent monooxygenase OpS4.